The primary structure comprises 284 residues: Phosphatidylserine decarboxylase proenzyme (284 aa).

Active-site charge relay system; for autoendoproteolytic cleavage activity residues include aspartate 88, histidine 145, and serine 251. Serine 251 acts as the Schiff-base intermediate with substrate; via pyruvic acid; for decarboxylase activity in catalysis. Residue serine 251 is modified to Pyruvic acid (Ser); by autocatalysis.

The protein belongs to the phosphatidylserine decarboxylase family. PSD-B subfamily. Prokaryotic type I sub-subfamily. As to quaternary structure, heterodimer of a large membrane-associated beta subunit and a small pyruvoyl-containing alpha subunit. The cofactor is pyruvate. Is synthesized initially as an inactive proenzyme. Formation of the active enzyme involves a self-maturation process in which the active site pyruvoyl group is generated from an internal serine residue via an autocatalytic post-translational modification. Two non-identical subunits are generated from the proenzyme in this reaction, and the pyruvate is formed at the N-terminus of the alpha chain, which is derived from the carboxyl end of the proenzyme. The autoendoproteolytic cleavage occurs by a canonical serine protease mechanism, in which the side chain hydroxyl group of the serine supplies its oxygen atom to form the C-terminus of the beta chain, while the remainder of the serine residue undergoes an oxidative deamination to produce ammonia and the pyruvoyl prosthetic group on the alpha chain. During this reaction, the Ser that is part of the protease active site of the proenzyme becomes the pyruvoyl prosthetic group, which constitutes an essential element of the active site of the mature decarboxylase.

Its subcellular location is the cell membrane. It catalyses the reaction a 1,2-diacyl-sn-glycero-3-phospho-L-serine + H(+) = a 1,2-diacyl-sn-glycero-3-phosphoethanolamine + CO2. Its pathway is phospholipid metabolism; phosphatidylethanolamine biosynthesis; phosphatidylethanolamine from CDP-diacylglycerol: step 2/2. In terms of biological role, catalyzes the formation of phosphatidylethanolamine (PtdEtn) from phosphatidylserine (PtdSer). This chain is Phosphatidylserine decarboxylase proenzyme, found in Polaromonas sp. (strain JS666 / ATCC BAA-500).